The sequence spans 657 residues: Methionine--tRNA ligase (657 aa).

The short motif at 13 to 23 (YYPSGNLHIGH) is the 'HIGH' region element. The 'KMSKS' region motif lies at 308-312 (KMSKS). Lys311 contributes to the ATP binding site. A tRNA-binding domain is found at 557-657 (DFDKVEIKAA…SAIPNGAVIK (101 aa)).

It belongs to the class-I aminoacyl-tRNA synthetase family. MetG type 2B subfamily. Homodimer.

The protein localises to the cytoplasm. It carries out the reaction tRNA(Met) + L-methionine + ATP = L-methionyl-tRNA(Met) + AMP + diphosphate. In terms of biological role, is required not only for elongation of protein synthesis but also for the initiation of all mRNA translation through initiator tRNA(fMet) aminoacylation. The protein is Methionine--tRNA ligase of Staphylococcus aureus (strain Mu50 / ATCC 700699).